Consider the following 359-residue polypeptide: 3-isopropylmalate dehydrogenase (359 aa).

The substrate site is built by arginine 96, arginine 106, arginine 134, and aspartate 223. Residues aspartate 223, aspartate 247, and aspartate 251 each contribute to the Mg(2+) site. 281 to 293 contributes to the NAD(+) binding site; it reads GSAPDIAGQGIAN.

This sequence belongs to the isocitrate and isopropylmalate dehydrogenases family. LeuB type 1 subfamily. As to quaternary structure, homodimer. It depends on Mg(2+) as a cofactor. Requires Mn(2+) as cofactor.

Its subcellular location is the cytoplasm. The catalysed reaction is (2R,3S)-3-isopropylmalate + NAD(+) = 4-methyl-2-oxopentanoate + CO2 + NADH. Its pathway is amino-acid biosynthesis; L-leucine biosynthesis; L-leucine from 3-methyl-2-oxobutanoate: step 3/4. Catalyzes the oxidation of 3-carboxy-2-hydroxy-4-methylpentanoate (3-isopropylmalate) to 3-carboxy-4-methyl-2-oxopentanoate. The product decarboxylates to 4-methyl-2 oxopentanoate. The sequence is that of 3-isopropylmalate dehydrogenase from Chromohalobacter salexigens (strain ATCC BAA-138 / DSM 3043 / CIP 106854 / NCIMB 13768 / 1H11).